The primary structure comprises 767 residues: Probable ubiquitin carboxyl-terminal hydrolase creB (767 aa).

Residues 49–462 enclose the USP domain; sequence YGMENYGNTC…CAYVLFYQET (414 aa). Catalysis depends on Cys-58, which acts as the Nucleophile. Disordered regions lie at residues 107–140 and 232–263; these read EAEA…DSPE and ASKQ…KTPN. Residues 250-263 are compositionally biased toward polar residues; that stretch reads SVDQSSSTGSKTPN. Catalysis depends on His-413, which acts as the Proton acceptor. Residues 490 to 767 form a disordered region; it reads LKQNGFPQSP…LRKKSFSILS (278 aa). Low complexity-rich tracts occupy residues 540 to 554 and 564 to 573; these read ESAP…SPLS and ERVTTVATPP. Positions 574 to 641 form a coiled coil; that stretch reads KNDALAKKER…ASKAEEDRRL (68 aa). Positions 577-650 are enriched in basic and acidic residues; the sequence is ALAKKERARE…LSHENGKEKQ (74 aa). Basic residues predominate over residues 656-667; the sequence is RLKRGSKSLSHR. Polar residues predominate over residues 690-700; it reads STLSQTGPTSE. Residues 701–713 are compositionally biased toward low complexity; sequence QQQQQQQQQQQQQ. Residues 731 to 749 are compositionally biased toward basic and acidic residues; sequence TIREDEQVNHKDSKHERTG. Positions 750–767 are enriched in basic residues; it reads HGKWRSFSLRKKSFSILS.

Belongs to the peptidase C19 family. Interacts with creA, creC and qutD.

It catalyses the reaction Thiol-dependent hydrolysis of ester, thioester, amide, peptide and isopeptide bonds formed by the C-terminal Gly of ubiquitin (a 76-residue protein attached to proteins as an intracellular targeting signal).. In terms of biological role, ubiquitin thioesterase component of the regulatory network controlling carbon source utilization through ubiquitination and deubiquitination involving creA, creB, creC, creD and acrB. Deubiquitinates the creA catabolic repressor and the quinate permease qutD. Also plays a role in response to carbon starvation and the control of extracellular proteases activity. In Aspergillus fumigatus (strain CBS 144.89 / FGSC A1163 / CEA10) (Neosartorya fumigata), this protein is Probable ubiquitin carboxyl-terminal hydrolase creB (creB).